A 1074-amino-acid chain; its full sequence is MSHYHRQGGPGQPHDSYEDQQQPYYTDQAHSGYDHHSYHQQQLYHAAYDAAQPEYQAAPVKPQRQPSRIRSNSSGSRSVSHTPAAYTNQGIPPVPSNLSAARQRSDPSQALPPSSSSYAQDAFSRPSYSSHRNAPNAPNSNHPSRWDPNASYDTAPTAPLYDPAPLPGSGQLDADPSQHSIDLGVREPLYDDQVMQQHYPYGGAAAFQRSDSYQSGRPGAGGYHSIDDEKSIHSKHSNQPPGAWNAGAPSMPYNNMPTSHSTIQMAQPAYPPSPYGEYEMHATGMPEPNMSIAGLGAPGALIAAAPMPGMQHHDSTYSRENRERIMRKRTVKRIPLQDGNLVLDIPVASSISKSTTNNPEFREMRYQACTSDPDRFIEEKYTLRPWLYGRETEMAIVLTCYNEDDVLFARTMGGVIKNIAHLCSRTRSKTWGPDAWKKVVVIIVADGRKKANERMLKALGLMGCYNEGVMKDHVLKKPVEAHIFEYTTRVQITEKGEVKVTPCPIQVVFCLKEQNKKKLNSHRWYFNAFCQMLKPNVCILLDVGTKPTGTSIYELWKSFDKHHRVGGACGEICVDTGRGCTALFNPLVASQNFEYKMSNILDKPTESVFGFISVLPGAFSAYRYKALLGRPLEMYFKGEKLHSGEGSNSIFEGNMYLAEDRILCFELVTKEREGWLLRYVKSAKAYTDVPDRVPEFISQRRRWLNGSLFASYYAVWHWYRIFTSGQPFLRKLWLLFQVIYNLVLLVFSWFGIANFFLAFYFLLSASTSTEGSDPFGGQGAAIVEIFQNIFIAMVIVVLVCSLGNRPQGSNFAYTSAIIIFALIMGLALYAAGYTIYLALDAAGLTHTNGWRVDNLETLFKTSGFRDIVISLAATYVMWLLCSLLHLEPWHMLTSFVQYLFLTPTYVIILSMYSMCNTNDLSWGTKQSNGPATDLGGATGCNSKQDGKGEMVDVKIPTSAADAEELWTHYRQTLSQPTVEVKQKRDKATRQEDHAKNFRTNLVLIWMCTNALVVIIFTSTWWNKYVRNHIYAGAVRRGEPVINPYQSAIFWSTAGLSAVRFVGSITFLLLRLFGH.

Disordered stretches follow at residues 1 to 32 (MSHYHRQGGPGQPHDSYEDQQQPYYTDQAHSG), 56 to 179 (QAAP…PSQH), and 209 to 255 (RSDS…PYNN). Polar residues predominate over residues 19–29 (DQQQPYYTDQA). Residues 68–80 (RIRSNSSGSRSVS) show a composition bias toward low complexity. 2 N-linked (GlcNAc...) asparagine glycosylation sites follow: N72 and N97. Residues 85 to 119 (AYTNQGIPPVPSNLSAARQRSDPSQALPPSSSSYA) are compositionally biased toward polar residues. Over residues 129 to 143 (SSHRNAPNAPNSNHP) the composition is skewed to low complexity. N149 is a glycosylation site (N-linked (GlcNAc...) asparagine). A glycan (N-linked (GlcNAc...) asparagine) is linked at N289. 8 helical membrane passes run 608–628 (VFGFISVLPGAFSAYRYKALL), 742–762 (LVLLVFSWFGIANFFLAFYFL), 779–799 (GAAIVEIFQNIFIAMVIVVLV), 817–837 (IIIFALIMGLALYAAGYTIYL), 867–887 (IVISLAATYVMWLLCSLLHLE), 891–911 (MLTSFVQYLFLTPTYVIILSM), 1001–1021 (LVLIWMCTNALVVIIFTSTWW), and 1048–1068 (IFWSTAGLSAVRFVGSITFLL).

Belongs to the chitin synthase family. Class II subfamily.

Its subcellular location is the cell membrane. It is found in the cytoplasmic vesicle membrane. The enzyme catalyses [(1-&gt;4)-N-acetyl-beta-D-glucosaminyl](n) + UDP-N-acetyl-alpha-D-glucosamine = [(1-&gt;4)-N-acetyl-beta-D-glucosaminyl](n+1) + UDP + H(+). Its function is as follows. Polymerizes chitin, a structural polymer of the cell wall and septum, by transferring the sugar moiety of UDP-GlcNAc to the non-reducing end of the growing chitin polymer. This Mycosarcoma maydis (Corn smut fungus) protein is Chitin synthase 2 (CHS2).